The sequence spans 337 residues: Ferredoxin--NADP reductase (337 aa).

Residues Asp35, Gln43, Tyr48, Ala88, Phe122, Asp289, and Thr330 each coordinate FAD.

Belongs to the ferredoxin--NADP reductase type 2 family. Homodimer. FAD serves as cofactor.

It carries out the reaction 2 reduced [2Fe-2S]-[ferredoxin] + NADP(+) + H(+) = 2 oxidized [2Fe-2S]-[ferredoxin] + NADPH. The protein is Ferredoxin--NADP reductase of Ehrlichia ruminantium (strain Gardel).